Consider the following 648-residue polypeptide: Macrolide export ATP-binding/permease protein MacB (648 aa).

Residues 5-243 (LELKDIRRSY…AGGTEPVVNT (239 aa)) enclose the ABC transporter domain. 41-48 (GASGSGKS) is an ATP binding site. A run of 4 helical transmembrane segments spans residues 273–293 (LLTM…VVVG), 523–543 (LFLT…VMNI), 576–596 (AVLV…LIAF), and 600–620 (LFLP…AFLC).

Belongs to the ABC transporter superfamily. Macrolide exporter (TC 3.A.1.122) family. Homodimer. Part of the tripartite efflux system MacAB-TolC, which is composed of an inner membrane transporter, MacB, a periplasmic membrane fusion protein, MacA, and an outer membrane component, TolC. The complex forms a large protein conduit and can translocate molecules across both the inner and outer membranes. Interacts with MacA.

The protein localises to the cell inner membrane. Its function is as follows. Part of the tripartite efflux system MacAB-TolC. MacB is a non-canonical ABC transporter that contains transmembrane domains (TMD), which form a pore in the inner membrane, and an ATP-binding domain (NBD), which is responsible for energy generation. Confers resistance against macrolides. The polypeptide is Macrolide export ATP-binding/permease protein MacB (Shigella sonnei (strain Ss046)).